The chain runs to 479 residues: Aspartyl/glutamyl-tRNA(Asn/Gln) amidotransferase subunit B (479 aa).

This sequence belongs to the GatB/GatE family. GatB subfamily. In terms of assembly, heterotrimer of A, B and C subunits.

The enzyme catalyses L-glutamyl-tRNA(Gln) + L-glutamine + ATP + H2O = L-glutaminyl-tRNA(Gln) + L-glutamate + ADP + phosphate + H(+). The catalysed reaction is L-aspartyl-tRNA(Asn) + L-glutamine + ATP + H2O = L-asparaginyl-tRNA(Asn) + L-glutamate + ADP + phosphate + 2 H(+). Allows the formation of correctly charged Asn-tRNA(Asn) or Gln-tRNA(Gln) through the transamidation of misacylated Asp-tRNA(Asn) or Glu-tRNA(Gln) in organisms which lack either or both of asparaginyl-tRNA or glutaminyl-tRNA synthetases. The reaction takes place in the presence of glutamine and ATP through an activated phospho-Asp-tRNA(Asn) or phospho-Glu-tRNA(Gln). The chain is Aspartyl/glutamyl-tRNA(Asn/Gln) amidotransferase subunit B from Streptococcus uberis (strain ATCC BAA-854 / 0140J).